Reading from the N-terminus, the 115-residue chain is Large ribosomal subunit protein bL20 (115 aa).

The protein belongs to the bacterial ribosomal protein bL20 family.

Binds directly to 23S ribosomal RNA and is necessary for the in vitro assembly process of the 50S ribosomal subunit. It is not involved in the protein synthesizing functions of that subunit. The sequence is that of Large ribosomal subunit protein bL20 from Borrelia garinii subsp. bavariensis (strain ATCC BAA-2496 / DSM 23469 / PBi) (Borreliella bavariensis).